Here is a 220-residue protein sequence, read N- to C-terminus: Deoxyribose-phosphate aldolase (220 aa).

Aspartate 89 serves as the catalytic Proton donor/acceptor. The Schiff-base intermediate with acetaldehyde role is filled by lysine 151. Lysine 180 serves as the catalytic Proton donor/acceptor.

It belongs to the DeoC/FbaB aldolase family. DeoC type 1 subfamily.

The protein resides in the cytoplasm. It carries out the reaction 2-deoxy-D-ribose 5-phosphate = D-glyceraldehyde 3-phosphate + acetaldehyde. Its pathway is carbohydrate degradation; 2-deoxy-D-ribose 1-phosphate degradation; D-glyceraldehyde 3-phosphate and acetaldehyde from 2-deoxy-alpha-D-ribose 1-phosphate: step 2/2. Its function is as follows. Catalyzes a reversible aldol reaction between acetaldehyde and D-glyceraldehyde 3-phosphate to generate 2-deoxy-D-ribose 5-phosphate. The sequence is that of Deoxyribose-phosphate aldolase from Streptococcus equi subsp. equi (strain 4047).